We begin with the raw amino-acid sequence, 87 residues long: RNA-binding protein Hfq (87 aa).

The Sm domain occupies aspartate 9–valine 68.

Belongs to the Hfq family. In terms of assembly, homohexamer.

Functionally, RNA chaperone that binds small regulatory RNA (sRNAs) and mRNAs to facilitate mRNA translational regulation in response to envelope stress, environmental stress and changes in metabolite concentrations. Also binds with high specificity to tRNAs. This chain is RNA-binding protein Hfq, found in Pseudoalteromonas translucida (strain TAC 125).